We begin with the raw amino-acid sequence, 176 residues long: ATP synthase subunit delta (176 aa).

This sequence belongs to the ATPase delta chain family. As to quaternary structure, F-type ATPases have 2 components, F(1) - the catalytic core - and F(0) - the membrane proton channel. F(1) has five subunits: alpha(3), beta(3), gamma(1), delta(1), epsilon(1). F(0) has three main subunits: a(1), b(2) and c(10-14). The alpha and beta chains form an alternating ring which encloses part of the gamma chain. F(1) is attached to F(0) by a central stalk formed by the gamma and epsilon chains, while a peripheral stalk is formed by the delta and b chains.

The protein resides in the cell membrane. F(1)F(0) ATP synthase produces ATP from ADP in the presence of a proton or sodium gradient. F-type ATPases consist of two structural domains, F(1) containing the extramembraneous catalytic core and F(0) containing the membrane proton channel, linked together by a central stalk and a peripheral stalk. During catalysis, ATP synthesis in the catalytic domain of F(1) is coupled via a rotary mechanism of the central stalk subunits to proton translocation. Functionally, this protein is part of the stalk that links CF(0) to CF(1). It either transmits conformational changes from CF(0) to CF(1) or is implicated in proton conduction. The sequence is that of ATP synthase subunit delta from Hamiltonella defensa subsp. Acyrthosiphon pisum (strain 5AT).